A 462-amino-acid chain; its full sequence is 23S rRNA (uracil(1939)-C(5))-methyltransferase RlmD (462 aa).

In terms of domain architecture, TRAM spans 6–76 (KSRKPQQPEY…KRLEEAEMVE (71 aa)). [4Fe-4S] cluster-binding residues include cysteine 90, cysteine 96, cysteine 99, and cysteine 178. S-adenosyl-L-methionine contacts are provided by glutamine 287, phenylalanine 316, asparagine 321, glutamate 340, aspartate 367, and aspartate 388. The active-site Nucleophile is the cysteine 414.

The protein belongs to the class I-like SAM-binding methyltransferase superfamily. RNA M5U methyltransferase family. RlmD subfamily.

The enzyme catalyses uridine(1939) in 23S rRNA + S-adenosyl-L-methionine = 5-methyluridine(1939) in 23S rRNA + S-adenosyl-L-homocysteine + H(+). Its function is as follows. Catalyzes the formation of 5-methyl-uridine at position 1939 (m5U1939) in 23S rRNA. The chain is 23S rRNA (uracil(1939)-C(5))-methyltransferase RlmD from Acinetobacter baumannii (strain AB0057).